Here is a 63-residue protein sequence, read N- to C-terminus: Large ribosomal subunit protein uL30 (63 aa).

Belongs to the universal ribosomal protein uL30 family. Part of the 50S ribosomal subunit.

The sequence is that of Large ribosomal subunit protein uL30 from Bradyrhizobium sp. (strain ORS 278).